The primary structure comprises 230 residues: SPbeta prophage-derived putative HNH endonuclease YoqL (230 aa).

An HNH domain is found at 136-188 (CSYCGLKIEDHKILFKGTYIQSDFHKEHVDHKGANDISNCIPACKSCNSSKHD).

This sequence belongs to the HNH nuclease family.

This chain is SPbeta prophage-derived putative HNH endonuclease YoqL (yoqL), found in Bacillus subtilis (strain 168).